The sequence spans 90 residues: RNA-binding protein Hfq (90 aa).

Residues 10 to 70 enclose the Sm domain; it reads DGFLNLLRRE…LSTITPARPL (61 aa).

Belongs to the Hfq family. Homohexamer.

Functionally, RNA chaperone that binds small regulatory RNA (sRNAs) and mRNAs to facilitate mRNA translational regulation in response to envelope stress, environmental stress and changes in metabolite concentrations. Also binds with high specificity to tRNAs. This is RNA-binding protein Hfq from Symbiobacterium thermophilum (strain DSM 24528 / JCM 14929 / IAM 14863 / T).